We begin with the raw amino-acid sequence, 221 residues long: Tetraspanin-2 (221 aa).

The Cytoplasmic segment spans residues 1–13 (MGRFRGGLRCIKY). The helical transmembrane segment at 14–34 (LLLGFNLLFWLAGSAVIAFGL) threads the bilayer. Residues 35 to 54 (WFRFGGAIKELSSEDKSPEY) lie on the Extracellular side of the membrane. Residues 55 to 75 (FYVGLYVLVGAGALMMAVGFF) traverse the membrane as a helical segment. Residues 76–90 (GCCGAMRESQCVLGS) lie on the Cytoplasmic side of the membrane. A helical transmembrane segment spans residues 91 to 111 (FFTCLLVIFAAEVTTGVFAFI). At 112-188 (GKGVAIRHVQ…ETIISVKLQL (77 aa)) the chain is on the extracellular side. N-linked (GlcNAc...) asparagine glycosylation occurs at Asn139. A helical membrane pass occupies residues 189 to 209 (IGIVGIGIAGLTIFGMIFSMV). The Cytoplasmic segment spans residues 210 to 221 (LCCAIRNSRDVI).

It belongs to the tetraspanin (TM4SF) family.

It localises to the membrane. Its function is as follows. May play a role in signalling in oligodendrocytes in the early stages of their terminal differentiation into myelin-forming glia and may also function in stabilizing the mature sheath. The polypeptide is Tetraspanin-2 (TSPAN2) (Homo sapiens (Human)).